The sequence spans 495 residues: Flagellin (495 aa).

It belongs to the bacterial flagellin family.

Its subcellular location is the secreted. The protein resides in the bacterial flagellum. In terms of biological role, flagellin is the subunit protein which polymerizes to form the filaments of bacterial flagella. The polypeptide is Flagellin (fliC) (Salmonella paratyphi A (strain ATCC 9150 / SARB42)).